Reading from the N-terminus, the 1938-residue chain is Myosin-4 (1938 aa).

Residues 33-82 (DAKSSVFVADPKESFVKATVQSREGGKVTAKTEAGATVTVKEDQVFPMNP) enclose the Myosin N-terminal SH3-like domain. Phosphoserine is present on S36. T64 and T69 each carry phosphothreonine. The region spanning 86 to 781 (DKIEDMAMMT…LLGLLEEMRD (696 aa)) is the Myosin motor domain. 179 to 186 (GESGAGKT) lines the ATP pocket. Y389 carries the phosphotyrosine modification. S392 is subject to Phosphoserine. A Phosphothreonine modification is found at T419. The residue at position 424 (Y424) is a Phosphotyrosine. Residues 658 to 680 (LNKLMTNLRSTHPHFVRCIIPNE) form an actin-binding region. H756 carries the post-translational modification Pros-methylhistidine. Residues 760 to 774 (KFGHTKVFFKAGLLG) form an actin-binding region. The IQ domain occupies 784 to 813 (LAQLITRTQAMCRGFLARVEYKKMVERRES). Positions 845–1926 (SAETEKEMAN…ESQVNKLRVK (1082 aa)) form a coiled coil. A phosphoserine mark is found at S1091, S1095, S1161, and S1236. A Phosphothreonine modification is found at T1240. S1242 bears the Phosphoserine mark. T1254 is subject to Phosphothreonine. S1260 is subject to Phosphoserine. A Phosphothreonine modification is found at T1264. Phosphoserine is present on S1277. T1285 carries the phosphothreonine modification. Residues S1287, S1291, S1302, and S1305 each carry the phosphoserine modification. Residue Y1463 is modified to Phosphotyrosine. T1466 is subject to Phosphothreonine. A Phosphoserine modification is found at S1473. The residue at position 1491 (Y1491) is a Phosphotyrosine. S1494 is modified (phosphoserine). Residue T1500 is modified to Phosphothreonine. S1513 bears the Phosphoserine mark. At T1516 the chain carries Phosphothreonine. Phosphoserine is present on residues S1541, S1553, S1573, S1599, S1602, S1713, and S1725. Residues T1729 and T1735 each carry the phosphothreonine modification. S1738 carries the phosphoserine modification.

This sequence belongs to the TRAFAC class myosin-kinesin ATPase superfamily. Myosin family. As to quaternary structure, muscle myosin is a hexameric protein that consists of 2 heavy chain subunits (MHC), 2 alkali light chain subunits (MLC) and 2 regulatory light chain subunits (MLC-2).

It localises to the cytoplasm. It is found in the myofibril. Functionally, muscle contraction. This chain is Myosin-4 (MYH4), found in Oryctolagus cuniculus (Rabbit).